The sequence spans 397 residues: Mediator of RNA polymerase II transcription subunit 3 (397 aa).

N-acetylmethionine is present on Met-1. A compositionally biased stretch (low complexity) spans 147-165 (ASTPTTTATPHANPITHAH). 3 disordered regions span residues 147-227 (ASTP…AQAQ), 288-327 (SMGAQNQGGQVSMSQFNGSGNGSNPNTNTNSNNTPLQSQL), and 346-370 (FQQQQQQQQQQQQPQPQYNMNMGMN). Composition is skewed to polar residues over residues 166–178 (SLSNPNSTATMQH) and 189–202 (SGSTMGTPTVHNST). Residues 211–223 (KKPRKPRQTKKAK) show a composition bias toward basic residues. Polar residues predominate over residues 290–303 (GAQNQGGQVSMSQF). The span at 309-322 (GSNPNTNTNSNNTP) shows a compositional bias: low complexity.

Belongs to the mediator complex subunit 3 family. Component of the Mediator complex, which is composed of at least 21 subunits that form three structurally distinct submodules. The Mediator head module contains MED6, MED8, MED11, SRB4/MED17, SRB5/MED18, ROX3/MED19, SRB2/MED20 and SRB6/MED22, the middle module contains MED1, MED4, NUT1/MED5, MED7, CSE2/MED9, NUT2/MED10, SRB7/MED21 and SOH1/MED31, and the tail module contains MED2, PGD1/MED3, RGR1/MED14, GAL11/MED15 and SIN4/MED16. The head and the middle modules interact directly with RNA polymerase II, whereas the elongated tail module interacts with gene-specific regulatory proteins. PGD1/MED3 interacts directly with the CYC8-TUP1 corepressor proteins.

The protein localises to the nucleus. In terms of biological role, component of the Mediator complex, a coactivator involved in the regulated transcription of nearly all RNA polymerase II-dependent genes. Mediator functions as a bridge to convey information from gene-specific regulatory proteins to the basal RNA polymerase II transcription machinery. The Mediator complex, having a compact conformation in its free form, is recruited to promoters by direct interactions with regulatory proteins and serves for the assembly of a functional preinitiation complex with RNA polymerase II and the general transcription factors. The Mediator complex unfolds to an extended conformation and partially surrounds RNA polymerase II, specifically interacting with the unphosphorylated form of the C-terminal domain (CTD) of RNA polymerase II. The Mediator complex dissociates from the RNA polymerase II holoenzyme and stays at the promoter when transcriptional elongation begins. PGD1/MED3 is also involved in direct repeat recombination. The chain is Mediator of RNA polymerase II transcription subunit 3 (PGD1) from Saccharomyces cerevisiae (strain ATCC 204508 / S288c) (Baker's yeast).